A 188-amino-acid polypeptide reads, in one-letter code: Elongation factor P (188 aa).

The protein belongs to the elongation factor P family.

Its subcellular location is the cytoplasm. The protein operates within protein biosynthesis; polypeptide chain elongation. Its function is as follows. Involved in peptide bond synthesis. Stimulates efficient translation and peptide-bond synthesis on native or reconstituted 70S ribosomes in vitro. Probably functions indirectly by altering the affinity of the ribosome for aminoacyl-tRNA, thus increasing their reactivity as acceptors for peptidyl transferase. The chain is Elongation factor P from Mycoplasmoides gallisepticum (strain R(low / passage 15 / clone 2)) (Mycoplasma gallisepticum).